The sequence spans 191 residues: Large ribosomal subunit protein uL6 (191 aa).

Belongs to the universal ribosomal protein uL6 family. In terms of assembly, part of the 50S ribosomal subunit.

Its function is as follows. This protein binds to the 23S rRNA, and is important in its secondary structure. It is located near the subunit interface in the base of the L7/L12 stalk, and near the tRNA binding site of the peptidyltransferase center. The chain is Large ribosomal subunit protein uL6 from Cyanothece sp. (strain PCC 7425 / ATCC 29141).